Reading from the N-terminus, the 255-residue chain is Geranylgeranylglyceryl phosphate synthase (255 aa).

Mg(2+)-binding residues include aspartate 34 and threonine 64. Sn-glycerol 1-phosphate contacts are provided by residues 182–188 (YLEAGSG), 213–214 (GG), and 235–236 (GN).

The protein belongs to the GGGP/HepGP synthase family. Group II subfamily. It depends on Mg(2+) as a cofactor.

It localises to the cytoplasm. The enzyme catalyses sn-glycerol 1-phosphate + (2E,6E,10E)-geranylgeranyl diphosphate = sn-3-O-(geranylgeranyl)glycerol 1-phosphate + diphosphate. Its pathway is membrane lipid metabolism; glycerophospholipid metabolism. Prenyltransferase that catalyzes the transfer of the geranylgeranyl moiety of geranylgeranyl diphosphate (GGPP) to the C3 hydroxyl of sn-glycerol-1-phosphate (G1P). This reaction is the first ether-bond-formation step in the biosynthesis of archaeal membrane lipids. The protein is Geranylgeranylglyceryl phosphate synthase of Saccharolobus solfataricus (strain ATCC 35092 / DSM 1617 / JCM 11322 / P2) (Sulfolobus solfataricus).